The chain runs to 100 residues: Urease subunit gamma (100 aa).

The protein belongs to the urease gamma subunit family. As to quaternary structure, heterotrimer of UreA (gamma), UreB (beta) and UreC (alpha) subunits. Three heterotrimers associate to form the active enzyme.

It localises to the cytoplasm. It catalyses the reaction urea + 2 H2O + H(+) = hydrogencarbonate + 2 NH4(+). It functions in the pathway nitrogen metabolism; urea degradation; CO(2) and NH(3) from urea (urease route): step 1/1. The sequence is that of Urease subunit gamma from Pseudomonas putida (strain W619).